Here is a 747-residue protein sequence, read N- to C-terminus: Potassium transporter 20 (747 aa).

The Cytoplasmic portion of the chain corresponds to 1–47; it reads MSVQEDDDAAGPEVDRLRRHDSFYGDAEKVSNDKSHGTGENWARTLQ. The chain crosses the membrane as a helical span at residues 48-68; that stretch reads LAFQSIGVVYGDVGTSPLYVY. At 69 to 84 the chain is on the extracellular side; the sequence is SSTFPDGVKHPDDLVG. The chain crosses the membrane as a helical span at residues 85 to 105; that stretch reads VLSLMLYTLILIPMVKYVFIV. The Cytoplasmic segment spans residues 106–171; it reads LYANDNGDGG…QKLESSNAAK (66 aa). Residues 172-192 traverse the membrane as a helical segment; that stretch reads IALFTITILGTSMVMGDGTLT. Residues 193-209 are Extracellular-facing; that stretch reads PAISVLSAVSGIREKAP. A helical membrane pass occupies residues 210–230; it reads SLTQLQVVWISVPILIVLFSV. Over 231 to 237 the chain is Cytoplasmic; it reads QRFGTDK. Residues 238–258 traverse the membrane as a helical segment; it reads VGYSFAPVISVWFVLIAGIGA. Topologically, residues 259–288 are extracellular; that stretch reads YNLAVHEITILRAFNPMYIIDYFRRNGKEA. A helical transmembrane segment spans residues 289–309; the sequence is WVSLGGAVLCITGTEAMFADL. At 310-318 the chain is on the cytoplasmic side; it reads GHFNIRAIQ. A helical transmembrane segment spans residues 319 to 339; the sequence is LSFTCVLFPSVALCYMGQAAY. Residues 340–353 are Extracellular-facing; the sequence is LRKFPEDVGDTFYK. A helical membrane pass occupies residues 354–374; sequence SLPAPLFWPVFVVAIMAAIIA. Over 375 to 410 the chain is Cytoplasmic; the sequence is SQAMLSGAFAILSKALPLGCFPRVEVVHTSNKYEGQ. Residues 411 to 431 form a helical membrane-spanning segment; sequence VYIPEVNFLIGVASVAITVAF. Topologically, residues 432 to 442 are extracellular; it reads QTTANIGNAYG. A helical membrane pass occupies residues 443–463; sequence ICVVMVFSITTHLMTVVMLLI. Over 464 to 469 the chain is Cytoplasmic; the sequence is WKVRLP. A helical membrane pass occupies residues 470–490; sequence FIAAFYVVFTFTEFLYLSSIL. Over 491–496 the chain is Extracellular; it reads SKFAEG. Residues 497–517 form a helical membrane-spanning segment; sequence GYLPFCFSLVLMALMATWHYV. Residues 518-747 lie on the Cytoplasmic side of the membrane; the sequence is HVKRYWYELD…LLKVGITYEI (230 aa).

This sequence belongs to the HAK/KUP transporter (TC 2.A.72.3) family.

The protein resides in the membrane. Functionally, high-affinity potassium transporter. The protein is Potassium transporter 20 (HAK20) of Oryza sativa subsp. japonica (Rice).